Reading from the N-terminus, the 132-residue chain is Glycine cleavage system H protein (132 aa).

In terms of domain architecture, Lipoyl-binding spans 24–107; sequence TATIGLSAFA…GEEGWLIKVR (84 aa). Lys65 carries the post-translational modification N6-lipoyllysine.

The protein belongs to the GcvH family. The glycine cleavage system is composed of four proteins: P, T, L and H. (R)-lipoate serves as cofactor.

Its function is as follows. The glycine cleavage system catalyzes the degradation of glycine. The H protein shuttles the methylamine group of glycine from the P protein to the T protein. This chain is Glycine cleavage system H protein, found in Synechocystis sp. (strain ATCC 27184 / PCC 6803 / Kazusa).